We begin with the raw amino-acid sequence, 141 residues long: Acetyltransferase YpeA (141 aa).

Positions 1 to 141 (MEIRVFRQED…GKRLIEDEEY (141 aa)) constitute an N-acetyltransferase domain.

This sequence belongs to the acetyltransferase family. YpeA subfamily.

This Escherichia coli O157:H7 protein is Acetyltransferase YpeA.